A 212-amino-acid chain; its full sequence is Urease accessory protein UreG (212 aa).

19 to 26 (GPVGSGKT) provides a ligand contact to GTP.

This sequence belongs to the SIMIBI class G3E GTPase family. UreG subfamily. Homodimer. UreD, UreF and UreG form a complex that acts as a GTP-hydrolysis-dependent molecular chaperone, activating the urease apoprotein by helping to assemble the nickel containing metallocenter of UreC. The UreE protein probably delivers the nickel.

It localises to the cytoplasm. Its function is as follows. Facilitates the functional incorporation of the urease nickel metallocenter. This process requires GTP hydrolysis, probably effectuated by UreG. The sequence is that of Urease accessory protein UreG from Vibrio parahaemolyticus.